The primary structure comprises 366 residues: NADH-quinone oxidoreductase subunit D (366 aa).

It belongs to the complex I 49 kDa subunit family. As to quaternary structure, NDH-1 is composed of 14 different subunits. Subunits NuoB, C, D, E, F, and G constitute the peripheral sector of the complex.

It localises to the cell membrane. It carries out the reaction a quinone + NADH + 5 H(+)(in) = a quinol + NAD(+) + 4 H(+)(out). Functionally, NDH-1 shuttles electrons from NADH, via FMN and iron-sulfur (Fe-S) centers, to quinones in the respiratory chain. The immediate electron acceptor for the enzyme in this species is believed to be a menaquinone. Couples the redox reaction to proton translocation (for every two electrons transferred, four hydrogen ions are translocated across the cytoplasmic membrane), and thus conserves the redox energy in a proton gradient. This chain is NADH-quinone oxidoreductase subunit D, found in Bacillus thuringiensis subsp. konkukian (strain 97-27).